We begin with the raw amino-acid sequence, 496 residues long: Cytochrome P450 monooxygenase cle4 (496 aa).

Residues 12–34 (FFTSPFPLTVGILSISLSGVLWY) form a helical membrane-spanning segment. A heme-binding site is contributed by cysteine 435.

It belongs to the cytochrome P450 family. Heme is required as a cofactor.

Its subcellular location is the membrane. Its pathway is secondary metabolite biosynthesis; terpenoid biosynthesis. In terms of biological role, cytochrome P450 monooxygenase; part of the cluster A that mediates the biosynthesis of chevalone E and its oxidized derivatives that possess a unique five-membered lactone ring and can synergistically enhance the cytotoxicity of doxorubicin (DOX) in breast cancer cells. Within the pathway, cle4 is involved in hydroxylation of the chavalone E scaffold at positions C-11 and C-12 and contributes with cle2 to the production of seven oxidation derivatives. The molecular scaffold is commonly biosynthesized by a series of enzymes including the non-reducing polyketide synthase (NR-PKS) cle1 that produces the alpha-pyrone triacetic acid lactone (TAL); The membrane-bound prenyltransferase cle5 that accepts TAL as its substrate to perform a C-3 geranylgeranylation reaction, in which the pathway-dedicated GGPS cle6 is required to provide GGPP, the other substrate of cle5; the FAD-dependent monooxygenase Cle3 that forms an (S)-epoxide ring at the terminal olefin of the geranylgeranyl group; and the terpene cyclase Cle7 that catalyzes the cyclization of the prenyl group that yields the pentacyclic pathway intermediate chevalone E. Chevalone E can derivatize into seven new oxidized analogs by the cytochrome P450 monooxygenases cle2 (acting at C-20) and cle4 (acting at C-11 and C-12). This Aspergillus versicolor protein is Cytochrome P450 monooxygenase cle4.